A 302-amino-acid polypeptide reads, in one-letter code: Taste receptor type 2 member 104 (302 aa).

Topologically, residues Met1–Ser7 are extracellular. A helical membrane pass occupies residues Ile8–Val28. The Cytoplasmic segment spans residues Leu29 to Lys43. Residues Ile44–Leu64 form a helical membrane-spanning segment. Over Asp65–Tyr87 the chain is Extracellular. The chain crosses the membrane as a helical span at residues Ile88 to Phe108. Over Leu109 to Lys128 the chain is Cytoplasmic. A helical membrane pass occupies residues Val129–Val149. At Thr150–Met182 the chain is on the extracellular side. Residues Asn160 and Asn161 are each glycosylated (N-linked (GlcNAc...) asparagine). Residues Gly183–Trp203 traverse the membrane as a helical segment. The Cytoplasmic segment spans residues Arg204–Ser233. Residues Phe234 to Leu254 form a helical membrane-spanning segment. Residues Thr255–Asn257 are Extracellular-facing. A helical membrane pass occupies residues Ile258–Ile278. The Cytoplasmic portion of the chain corresponds to Leu279–Thr302.

This sequence belongs to the G-protein coupled receptor T2R family.

The protein resides in the membrane. Its function is as follows. Putative taste receptor which may play a role in the perception of bitterness. The chain is Taste receptor type 2 member 104 from Rattus norvegicus (Rat).